A 158-amino-acid chain; its full sequence is Protein Smg homolog (158 aa).

It belongs to the Smg family.

This chain is Protein Smg homolog, found in Pseudoalteromonas atlantica (strain T6c / ATCC BAA-1087).